Consider the following 380-residue polypeptide: Endonuclease III homolog 2 (380 aa).

Positions 8 to 12 (RKRKH) match the Nuclear localization signal motif. Positions 15-40 (VDIEEVEVRSKYFKKNERTVELVKEN) are interaction with MLH1. Residue Lys194 forms a Glycyl lysine isopeptide (Lys-Gly) (interchain with G-Cter in SUMO) linkage. Positions 228–252 (FDSDIPYDIEGILSLPGVGPKMGYL) constitute a HhH domain. Residue Lys248 is the Nucleophile; for N-glycosylase activity of the active site. [4Fe-4S] cluster contacts are provided by Cys319, Cys326, Cys329, and Cys335. Residues 376–380 (RHKKK) carry the Nuclear localization signal motif.

The protein belongs to the Nth/MutY family. Interacts with MLH1. It depends on [4Fe-4S] cluster as a cofactor. Post-translationally, monosumoylated.

The protein resides in the nucleus. The enzyme catalyses 2'-deoxyribonucleotide-(2'-deoxyribose 5'-phosphate)-2'-deoxyribonucleotide-DNA = a 3'-end 2'-deoxyribonucleotide-(2,3-dehydro-2,3-deoxyribose 5'-phosphate)-DNA + a 5'-end 5'-phospho-2'-deoxyribonucleoside-DNA + H(+). In terms of biological role, bifunctional DNA N-glycosylase with associated apurinic/apyrimidinic (AP) lyase function that catalyzes the first step in base excision repair (BER), the primary repair pathway for the repair of oxidative DNA damage. The DNA N-glycosylase activity releases the damaged DNA base from DNA by cleaving the N-glycosidic bond, leaving an AP site. The AP-lyase activity cleaves the phosphodiester bond 3' to the AP site by a beta-elimination. Primarily recognizes and repairs oxidative base damage of pyrimidines, but also purine-derived lesions, alkylation damage as well as abasic sites. Can also repair the oxidation products of 8-oxoguanine. The polypeptide is Endonuclease III homolog 2 (NTG2) (Saccharomyces cerevisiae (strain ATCC 204508 / S288c) (Baker's yeast)).